The chain runs to 359 residues: Peptide chain release factor 1 (359 aa).

N5-methylglutamine is present on Gln-236.

The protein belongs to the prokaryotic/mitochondrial release factor family. In terms of processing, methylated by PrmC. Methylation increases the termination efficiency of RF1.

The protein localises to the cytoplasm. Functionally, peptide chain release factor 1 directs the termination of translation in response to the peptide chain termination codons UAG and UAA. This Streptococcus pyogenes serotype M18 (strain MGAS8232) protein is Peptide chain release factor 1.